The primary structure comprises 251 residues: MKIKMNSKDVNFWYGEKKALNDINLPIYENKITALIGPSGCGKSTFLRCLNRMNDLISGVKITGEITLDEKNIYDKDVDVVELRKRVGMVFQKPNPFPMSIYDNIAYGPRIHGIKDKKQLDEIVEWALKKSALWDDVKEDLKKSALKLSGGQQQRLCIARTIAVKPDVILMDEPCSALDPISTLKIEDLMVELKKEYTIVIVTHNMQQASRVSDYTGFFMLGDLVEFNKTDKLFVEPENKKTEDYISGRFG.

Residues 5-246 enclose the ABC transporter domain; the sequence is MNSKDVNFWY…PENKKTEDYI (242 aa). ATP is bound at residue 37 to 44; the sequence is GPSGCGKS.

This sequence belongs to the ABC transporter superfamily. Phosphate importer (TC 3.A.1.7) family. In terms of assembly, the complex is composed of two ATP-binding proteins (PstB), two transmembrane proteins (PstC and PstA) and a solute-binding protein (PstS).

It is found in the cell membrane. It catalyses the reaction phosphate(out) + ATP + H2O = ADP + 2 phosphate(in) + H(+). Its function is as follows. Part of the ABC transporter complex PstSACB involved in phosphate import. Responsible for energy coupling to the transport system. This Methanococcus maripaludis (strain DSM 14266 / JCM 13030 / NBRC 101832 / S2 / LL) protein is Phosphate import ATP-binding protein PstB.